We begin with the raw amino-acid sequence, 70 residues long: Turripeptide Gsp9.3 (70 aa).

The signal sequence occupies residues 1 to 20; it reads MKVYCLLLVLLVGLVSQAHG. One can recognise a Kazal-like domain in the interval 21-70; that stretch reads QLDKKCQMVCTFDYRPVCGSDGRTYPNKCTLTSTACMSQRSITVFHDGEC. 3 cysteine pairs are disulfide-bonded: cysteine 26/cysteine 56, cysteine 30/cysteine 49, and cysteine 38/cysteine 70.

It belongs to the conopeptide P-like superfamily. Expressed by the venom duct.

The protein localises to the secreted. Acts as a neurotoxin by inhibiting an ion channel. May also act as a serine protease inhibitor, since it possess the kazal serine protease inhibitor signature. The protein is Turripeptide Gsp9.3 of Gemmula speciosa (Splendid gem-turris).